The primary structure comprises 550 residues: Chaperonin GroEL (550 aa).

ATP contacts are provided by residues threonine 30–proline 33, lysine 51, aspartate 87–threonine 91, glycine 415, and aspartate 496. Residues proline 526–tyrosine 550 form a disordered region. Residues glycine 537–tyrosine 550 are compositionally biased toward gly residues.

It belongs to the chaperonin (HSP60) family. As to quaternary structure, forms a cylinder of 14 subunits composed of two heptameric rings stacked back-to-back. Interacts with the co-chaperonin GroES.

It is found in the cytoplasm. It carries out the reaction ATP + H2O + a folded polypeptide = ADP + phosphate + an unfolded polypeptide.. Its function is as follows. Together with its co-chaperonin GroES, plays an essential role in assisting protein folding. The GroEL-GroES system forms a nano-cage that allows encapsulation of the non-native substrate proteins and provides a physical environment optimized to promote and accelerate protein folding. In Chloroherpeton thalassium (strain ATCC 35110 / GB-78), this protein is Chaperonin GroEL.